Here is a 350-residue protein sequence, read N- to C-terminus: Probable dual-specificity RNA methyltransferase RlmN (350 aa).

Glu-91 functions as the Proton acceptor in the catalytic mechanism. Residues 97–327 form the Radical SAM core domain; it reads YHHGNSVCIS…VTIRREMGRD (231 aa). A disulfide bridge links Cys-104 with Cys-332. [4Fe-4S] cluster contacts are provided by Cys-111, Cys-115, and Cys-118. S-adenosyl-L-methionine contacts are provided by residues 158–159, Ser-190, 213–215, and Asn-289; these read GE and SLH. Cys-332 serves as the catalytic S-methylcysteine intermediate.

The protein belongs to the radical SAM superfamily. RlmN family. Requires [4Fe-4S] cluster as cofactor.

The protein localises to the cytoplasm. It carries out the reaction adenosine(2503) in 23S rRNA + 2 reduced [2Fe-2S]-[ferredoxin] + 2 S-adenosyl-L-methionine = 2-methyladenosine(2503) in 23S rRNA + 5'-deoxyadenosine + L-methionine + 2 oxidized [2Fe-2S]-[ferredoxin] + S-adenosyl-L-homocysteine. It catalyses the reaction adenosine(37) in tRNA + 2 reduced [2Fe-2S]-[ferredoxin] + 2 S-adenosyl-L-methionine = 2-methyladenosine(37) in tRNA + 5'-deoxyadenosine + L-methionine + 2 oxidized [2Fe-2S]-[ferredoxin] + S-adenosyl-L-homocysteine. In terms of biological role, specifically methylates position 2 of adenine 2503 in 23S rRNA and position 2 of adenine 37 in tRNAs. The polypeptide is Probable dual-specificity RNA methyltransferase RlmN (Lachnospira eligens (strain ATCC 27750 / DSM 3376 / VPI C15-48 / C15-B4) (Eubacterium eligens)).